Consider the following 253-residue polypeptide: ATP synthase subunit b 2 (253 aa).

A helical transmembrane segment spans residues 9 to 27 (VLEIVNFLVLVWLLKRFLY).

Belongs to the ATPase B chain family. F-type ATPases have 2 components, F(1) - the catalytic core - and F(0) - the membrane proton channel. F(1) has five subunits: alpha(3), beta(3), gamma(1), delta(1), epsilon(1). F(0) has three main subunits: a(1), b(2) and c(10-14). The alpha and beta chains form an alternating ring which encloses part of the gamma chain. F(1) is attached to F(0) by a central stalk formed by the gamma and epsilon chains, while a peripheral stalk is formed by the delta and b chains.

It localises to the cell inner membrane. F(1)F(0) ATP synthase produces ATP from ADP in the presence of a proton or sodium gradient. F-type ATPases consist of two structural domains, F(1) containing the extramembraneous catalytic core and F(0) containing the membrane proton channel, linked together by a central stalk and a peripheral stalk. During catalysis, ATP synthesis in the catalytic domain of F(1) is coupled via a rotary mechanism of the central stalk subunits to proton translocation. Its function is as follows. Component of the F(0) channel, it forms part of the peripheral stalk, linking F(1) to F(0). This Methylococcus capsulatus (strain ATCC 33009 / NCIMB 11132 / Bath) protein is ATP synthase subunit b 2.